We begin with the raw amino-acid sequence, 213 residues long: Uridine kinase (213 aa).

15–22 (GASASGKS) is a binding site for ATP.

It belongs to the uridine kinase family.

The protein resides in the cytoplasm. The catalysed reaction is uridine + ATP = UMP + ADP + H(+). It carries out the reaction cytidine + ATP = CMP + ADP + H(+). It participates in pyrimidine metabolism; CTP biosynthesis via salvage pathway; CTP from cytidine: step 1/3. It functions in the pathway pyrimidine metabolism; UMP biosynthesis via salvage pathway; UMP from uridine: step 1/1. The polypeptide is Uridine kinase (Enterobacter sp. (strain 638)).